We begin with the raw amino-acid sequence, 78 residues long: Large ribosomal subunit protein uL29 (78 aa).

The protein belongs to the universal ribosomal protein uL29 family.

The chain is Large ribosomal subunit protein uL29 from Crocosphaera subtropica (strain ATCC 51142 / BH68) (Cyanothece sp. (strain ATCC 51142)).